The chain runs to 659 residues: DNA helicase/primase complex-associated protein (659 aa).

This sequence belongs to the herpesviridae HEPA family. Associates with the primase and the helicase to form the helicase-primase complex. Interacts with the origin-binding protein. Interacts with the polymerase catalytic subunit.

The protein localises to the host nucleus. Its function is as follows. Component of the helicase/primase complex. Unwinds the DNA at the replication forks and generates single-stranded DNA for both leading and lagging strand synthesis. The primase synthesizes short RNA primers on the lagging strand that the polymerase presumably elongates using dNTPs. The primase-associated factor has no known catalytic activity in the complex and may serve to facilitate the formation of the replisome by directly interacting with the origin-binding protein and the polymerase. This Human herpesvirus 7 (strain JI) (HHV-7) protein is DNA helicase/primase complex-associated protein (U74).